The chain runs to 388 residues: MTDALSIARDLIRCPSVTPADAGALGVLENALNAAGFTCHRVTFSEPGTADVDNLYARIGSEGPHITFAGHTDVVPAGDESAWSVGAFSGEVKDGFLHGRGAVDMKGGIACSVAAVLEHLAANGGKPRGDGTGSISFLITGDEEDVSINGTIKLLKWAAERGETFDHCVLGEPSNVETLGDTIKVGRRGSQSGTLYVDGVQGHVAYPHRASNPVPDISRLIVAISDEPLDHGSAQFQASNLEFTSVDVGNKANNVIPGEARAKFNIRYNDNHTQASLRELVETRLAKACGNRIKARIVWEPSNSNVFVTKPGPFTDLAVSAIEEITGRKPELSTSGGTSDARFISSYCPVIEFGLVGQTMHQVDERVPVKDLEKLTQVYRGILTRYFG.

A Zn(2+)-binding site is contributed by histidine 71. Aspartate 73 is an active-site residue. Aspartate 104 contacts Zn(2+). Glutamate 143 serves as the catalytic Proton acceptor. Residues glutamate 144, glutamate 172, and histidine 361 each contribute to the Zn(2+) site.

Belongs to the peptidase M20A family. DapE subfamily. In terms of assembly, homodimer. It depends on Zn(2+) as a cofactor. Co(2+) is required as a cofactor.

The enzyme catalyses N-succinyl-(2S,6S)-2,6-diaminopimelate + H2O = (2S,6S)-2,6-diaminopimelate + succinate. It functions in the pathway amino-acid biosynthesis; L-lysine biosynthesis via DAP pathway; LL-2,6-diaminopimelate from (S)-tetrahydrodipicolinate (succinylase route): step 3/3. Its function is as follows. Catalyzes the hydrolysis of N-succinyl-L,L-diaminopimelic acid (SDAP), forming succinate and LL-2,6-diaminopimelate (DAP), an intermediate involved in the bacterial biosynthesis of lysine and meso-diaminopimelic acid, an essential component of bacterial cell walls. The protein is Succinyl-diaminopimelate desuccinylase of Bradyrhizobium diazoefficiens (strain JCM 10833 / BCRC 13528 / IAM 13628 / NBRC 14792 / USDA 110).